The sequence spans 319 residues: Acetyl-coenzyme A carboxylase carboxyl transferase subunit alpha (319 aa).

The 262-residue stretch at 35–296 folds into the CoA carboxyltransferase C-terminal domain; sequence NIDEEVHRLR…KAQLLTDLAD (262 aa).

The protein belongs to the AccA family. As to quaternary structure, acetyl-CoA carboxylase is a heterohexamer composed of biotin carboxyl carrier protein (AccB), biotin carboxylase (AccC) and two subunits each of ACCase subunit alpha (AccA) and ACCase subunit beta (AccD).

The protein resides in the cytoplasm. The catalysed reaction is N(6)-carboxybiotinyl-L-lysyl-[protein] + acetyl-CoA = N(6)-biotinyl-L-lysyl-[protein] + malonyl-CoA. The protein operates within lipid metabolism; malonyl-CoA biosynthesis; malonyl-CoA from acetyl-CoA: step 1/1. Functionally, component of the acetyl coenzyme A carboxylase (ACC) complex. First, biotin carboxylase catalyzes the carboxylation of biotin on its carrier protein (BCCP) and then the CO(2) group is transferred by the carboxyltransferase to acetyl-CoA to form malonyl-CoA. The chain is Acetyl-coenzyme A carboxylase carboxyl transferase subunit alpha from Escherichia coli O45:K1 (strain S88 / ExPEC).